A 261-amino-acid polypeptide reads, in one-letter code: 22 kDa alpha-zein 8b (261 aa).

Residues 1–16 (LALLALLALFVSATNA) form the signal peptide.

This sequence belongs to the zein family.

Its function is as follows. Zeins are major seed storage proteins. The sequence is that of 22 kDa alpha-zein 8b from Zea mays (Maize).